Reading from the N-terminus, the 75-residue chain is Small ribosomal subunit protein bS18 (75 aa).

This sequence belongs to the bacterial ribosomal protein bS18 family. As to quaternary structure, part of the 30S ribosomal subunit. Forms a tight heterodimer with protein bS6.

In terms of biological role, binds as a heterodimer with protein bS6 to the central domain of the 16S rRNA, where it helps stabilize the platform of the 30S subunit. The chain is Small ribosomal subunit protein bS18 from Cereibacter sphaeroides (strain KD131 / KCTC 12085) (Rhodobacter sphaeroides).